Consider the following 101-residue polypeptide: Chaperone modulatory protein CbpM (101 aa).

Belongs to the CbpM family.

Functionally, interacts with CbpA and inhibits both the DnaJ-like co-chaperone activity and the DNA binding activity of CbpA. Together with CbpA, modulates the activity of the DnaK chaperone system. Does not inhibit the co-chaperone activity of DnaJ. The chain is Chaperone modulatory protein CbpM from Escherichia coli (strain K12 / MC4100 / BW2952).